A 311-amino-acid chain; its full sequence is Probable cell division protein WhiA (311 aa).

The H-T-H motif DNA-binding region spans 274 to 307; it reads SLKELGSLLTPPLTKSGVNHRFRKLELIAEKIRN.

The protein belongs to the WhiA family.

Functionally, involved in cell division and chromosome segregation. The protein is Probable cell division protein WhiA of Carboxydothermus hydrogenoformans (strain ATCC BAA-161 / DSM 6008 / Z-2901).